The primary structure comprises 202 residues: Ribonuclease HII (202 aa).

In terms of domain architecture, RNase H type-2 spans 18–202 (TYICGVDEAG…FAPVAKLLKQ (185 aa)). Residues Asp24, Glu25, and Asp116 each coordinate a divalent metal cation.

The protein belongs to the RNase HII family. It depends on Mn(2+) as a cofactor. Mg(2+) is required as a cofactor.

Its subcellular location is the cytoplasm. It catalyses the reaction Endonucleolytic cleavage to 5'-phosphomonoester.. Functionally, endonuclease that specifically degrades the RNA of RNA-DNA hybrids. The protein is Ribonuclease HII of Acholeplasma laidlawii (strain PG-8A).